We begin with the raw amino-acid sequence, 259 residues long: Adenylate kinase (259 aa).

52–57 (GAGKGT) provides a ligand contact to ATP. Positions 72–101 (ATGDMLRSQVAKKTDLGREAKKIMDQGGLV) are NMP. Residues Thr73, Arg78, 99–101 (GLV), 128–131 (GFPR), and Gln135 contribute to the AMP site. An LID region spans residues 169–206 (GRLVHPASGRSYHKIFNPPKEAMKDDITGEPLVQRSDD). ATP contacts are provided by residues Arg170 and 179–180 (SY). Residues Arg203 and Arg214 each coordinate AMP. Position 242 (Gln242) interacts with ATP.

This sequence belongs to the adenylate kinase family. AK2 subfamily. As to quaternary structure, monomer.

It localises to the cytoplasm. The protein resides in the mitochondrion intermembrane space. It carries out the reaction AMP + ATP = 2 ADP. In terms of biological role, catalyzes the reversible transfer of the terminal phosphate group between ATP and AMP. Plays an important role in cellular energy homeostasis and in adenine nucleotide metabolism. Adenylate kinase activity is critical for regulation of the phosphate utilization and the AMP de novo biosynthesis pathways. This chain is Adenylate kinase (adk1), found in Emericella nidulans (strain FGSC A4 / ATCC 38163 / CBS 112.46 / NRRL 194 / M139) (Aspergillus nidulans).